A 325-amino-acid chain; its full sequence is Ribose-phosphate pyrophosphokinase (325 aa).

ATP is bound by residues 45-47 (NGE) and 104-105 (RQ). Positions 138 and 178 each coordinate Mg(2+). Lysine 202 is a catalytic residue. D-ribose 5-phosphate is bound by residues arginine 204, aspartate 230, and 234–238 (DTGGT).

The protein belongs to the ribose-phosphate pyrophosphokinase family. Class I subfamily. Homohexamer. The cofactor is Mg(2+).

The protein resides in the cytoplasm. The enzyme catalyses D-ribose 5-phosphate + ATP = 5-phospho-alpha-D-ribose 1-diphosphate + AMP + H(+). The protein operates within metabolic intermediate biosynthesis; 5-phospho-alpha-D-ribose 1-diphosphate biosynthesis; 5-phospho-alpha-D-ribose 1-diphosphate from D-ribose 5-phosphate (route I): step 1/1. Involved in the biosynthesis of the central metabolite phospho-alpha-D-ribosyl-1-pyrophosphate (PRPP) via the transfer of pyrophosphoryl group from ATP to 1-hydroxyl of ribose-5-phosphate (Rib-5-P). The polypeptide is Ribose-phosphate pyrophosphokinase (Corynebacterium glutamicum (strain ATCC 13032 / DSM 20300 / JCM 1318 / BCRC 11384 / CCUG 27702 / LMG 3730 / NBRC 12168 / NCIMB 10025 / NRRL B-2784 / 534)).